The following is a 394-amino-acid chain: Penicillopepsin-2 (394 aa).

Residues 1-20 (MVVFSKITVVLAGLATVASA) form the signal peptide. The propeptide at 21–71 (VPTGTSRKSTFTVNQKARPVAQAKAINLPGMYASALSKYGAAVPASVKAAA) is activation peptide. The Peptidase A1 domain occupies 87–391 (YLTPVNVGGT…DANGPRLGFA (305 aa)). Asp-103 is a catalytic residue. N-linked (GlcNAc...) asparagine glycosylation occurs at Asn-132. Asp-283 is an active-site residue. Cys-319 and Cys-354 are oxidised to a cystine.

Belongs to the peptidase A1 family. As to quaternary structure, monomer.

It localises to the secreted. It carries out the reaction Hydrolysis of proteins with broad specificity similar to that of pepsin A, preferring hydrophobic residues at P1 and P1', but also cleaving 20-Gly-|-Glu-21 in the B chain of insulin. Clots milk, and activates trypsinogen.. Functionally, secreted aspartic endopeptidase that allows assimilation of proteinaceous substrates. The scissile peptide bond is attacked by a nucleophilic water molecule activated by two aspartic residues in the active site. Shows a broad primary substrate specificity. Favors hydrophobic residues at the P1 and P1' positions, but can also activate trypsinogen and hydrolyze the B chain of insulin between positions 'Gly-20' and 'Glu-21'. The chain is Penicillopepsin-2 from Penicillium janthinellum (Penicillium vitale).